A 231-amino-acid chain; its full sequence is Trypsin (231 aa).

The propeptide at 1-8 (FPTDDDDK) is activation peptide. Positions 9-229 (IVGGYTCAAN…YVNWIQQTIA (221 aa)) constitute a Peptidase S1 domain. 6 disulfide bridges follow: cysteine 15-cysteine 145, cysteine 33-cysteine 49, cysteine 117-cysteine 218, cysteine 124-cysteine 191, cysteine 156-cysteine 170, and cysteine 181-cysteine 205. Residue histidine 48 is the Charge relay system of the active site. Positions 60, 62, 65, and 70 each coordinate Ca(2+). Aspartate 92 acts as the Charge relay system in catalysis. Serine 185 acts as the Charge relay system in catalysis.

This sequence belongs to the peptidase S1 family. It depends on Ca(2+) as a cofactor.

It localises to the secreted. The protein resides in the extracellular space. It catalyses the reaction Preferential cleavage: Arg-|-Xaa, Lys-|-Xaa.. This is Trypsin from Sus scrofa (Pig).